Consider the following 97-residue polypeptide: Aspartyl/glutamyl-tRNA(Asn/Gln) amidotransferase subunit C (97 aa).

Positions 58–78 (LPQGRLRKDTPRDPLDRENAL) are disordered. A compositionally biased stretch (basic and acidic residues) spans 63–77 (LRKDTPRDPLDRENA).

It belongs to the GatC family. As to quaternary structure, heterotrimer of A, B and C subunits.

The enzyme catalyses L-glutamyl-tRNA(Gln) + L-glutamine + ATP + H2O = L-glutaminyl-tRNA(Gln) + L-glutamate + ADP + phosphate + H(+). The catalysed reaction is L-aspartyl-tRNA(Asn) + L-glutamine + ATP + H2O = L-asparaginyl-tRNA(Asn) + L-glutamate + ADP + phosphate + 2 H(+). Its function is as follows. Allows the formation of correctly charged Asn-tRNA(Asn) or Gln-tRNA(Gln) through the transamidation of misacylated Asp-tRNA(Asn) or Glu-tRNA(Gln) in organisms which lack either or both of asparaginyl-tRNA or glutaminyl-tRNA synthetases. The reaction takes place in the presence of glutamine and ATP through an activated phospho-Asp-tRNA(Asn) or phospho-Glu-tRNA(Gln). The sequence is that of Aspartyl/glutamyl-tRNA(Asn/Gln) amidotransferase subunit C from Saccharolobus islandicus (strain Y.N.15.51 / Yellowstone #2) (Sulfolobus islandicus).